The sequence spans 426 residues: Selenocysteine lyase (426 aa).

At Lys239 the chain carries N6-(pyridoxal phosphate)lysine. Cys367 (S-selanylcysteine intermediate) is an active-site residue.

This sequence belongs to the class-V pyridoxal-phosphate-dependent aminotransferase family. In terms of assembly, homodimer. Pyridoxal 5'-phosphate is required as a cofactor.

It is found in the cytoplasm. Its subcellular location is the cytosol. It catalyses the reaction L-selenocysteine + AH2 = hydrogenselenide + L-alanine + A + H(+). In terms of biological role, catalyzes the decomposition of L-selenocysteine to L-alanine and elemental selenium. This is Selenocysteine lyase (scly) from Xenopus laevis (African clawed frog).